Reading from the N-terminus, the 179-residue chain is Large ribosomal subunit protein uL5 (179 aa).

The protein belongs to the universal ribosomal protein uL5 family. As to quaternary structure, part of the 50S ribosomal subunit; part of the 5S rRNA/L5/L18/L25 subcomplex. Contacts the 5S rRNA and the P site tRNA. Forms a bridge to the 30S subunit in the 70S ribosome.

This is one of the proteins that bind and probably mediate the attachment of the 5S RNA into the large ribosomal subunit, where it forms part of the central protuberance. In the 70S ribosome it contacts protein S13 of the 30S subunit (bridge B1b), connecting the 2 subunits; this bridge is implicated in subunit movement. Contacts the P site tRNA; the 5S rRNA and some of its associated proteins might help stabilize positioning of ribosome-bound tRNAs. This is Large ribosomal subunit protein uL5 from Lawsonia intracellularis (strain PHE/MN1-00).